The following is a 257-amino-acid chain: Type III pantothenate kinase (257 aa).

6 to 13 (EQGNTNTL) is a binding site for ATP. Residue 107–110 (GADR) participates in substrate binding. D109 serves as the catalytic Proton acceptor. D129 is a binding site for K(+). ATP is bound at residue T132. Residue T184 participates in substrate binding.

This sequence belongs to the type III pantothenate kinase family. As to quaternary structure, homodimer. The cofactor is NH4(+). It depends on K(+) as a cofactor.

The protein resides in the cytoplasm. The enzyme catalyses (R)-pantothenate + ATP = (R)-4'-phosphopantothenate + ADP + H(+). It functions in the pathway cofactor biosynthesis; coenzyme A biosynthesis; CoA from (R)-pantothenate: step 1/5. In terms of biological role, catalyzes the phosphorylation of pantothenate (Pan), the first step in CoA biosynthesis. This is Type III pantothenate kinase from Phenylobacterium zucineum (strain HLK1).